The chain runs to 732 residues: DNA-directed RNA polymerase subunit beta' (732 aa).

Residues cysteine 70, cysteine 72, cysteine 85, and cysteine 88 each coordinate Zn(2+). Residues aspartate 575, aspartate 577, and aspartate 579 each contribute to the Mg(2+) site.

Belongs to the RNA polymerase beta' chain family. RpoC1 subfamily. In terms of assembly, in plastids the minimal PEP RNA polymerase catalytic core is composed of four subunits: alpha, beta, beta', and beta''. When a (nuclear-encoded) sigma factor is associated with the core the holoenzyme is formed, which can initiate transcription. Requires Mg(2+) as cofactor. The cofactor is Zn(2+).

It localises to the plastid. The protein resides in the chloroplast. The catalysed reaction is RNA(n) + a ribonucleoside 5'-triphosphate = RNA(n+1) + diphosphate. Its function is as follows. DNA-dependent RNA polymerase catalyzes the transcription of DNA into RNA using the four ribonucleoside triphosphates as substrates. This is DNA-directed RNA polymerase subunit beta' from Thalassiosira pseudonana (Marine diatom).